We begin with the raw amino-acid sequence, 338 residues long: Serpentine receptor class alpha-32 (338 aa).

The next 7 helical transmembrane spans lie at V30–I50, I63–I83, R120–F140, G152–L172, L199–Y219, L249–A269, and T289–G309.

The protein belongs to the nematode receptor-like protein sra family.

It is found in the membrane. This Caenorhabditis elegans protein is Serpentine receptor class alpha-32 (sra-32).